The following is a 389-amino-acid chain: Naringenin-chalcone synthase (389 aa).

The active site involves C164.

It belongs to the thiolase-like superfamily. Chalcone/stilbene synthases family. Expressed in glandular trichomes. Detected at low levels in female flowers, stems, seeds, leaves and roots.

It is found in the cytoplasm. The enzyme catalyses (E)-4-coumaroyl-CoA + 3 malonyl-CoA + 3 H(+) = 2',4,4',6'-tetrahydroxychalcone + 3 CO2 + 4 CoA. Chalcone synthase that can also use isovaleryl-CoA, isobutyryl-CoA or hexanoyl-CoA as substrates, but that is unable to produce olivetol or olivetolic acid. This Cannabis sativa (Hemp) protein is Naringenin-chalcone synthase (CHS).